Here is a 637-residue protein sequence, read N- to C-terminus: Poly(U)-binding-splicing factor hfp (637 aa).

2 stretches are compositionally biased toward basic and acidic residues: residues 1–20 (MGSN…REIS) and 28–37 (TRSDSGKSTD). Positions 1-41 (MGSNDRASRSPRSDDQREISDMPATKRTRSDSGKSTDSKIP) are disordered. 2 positions are modified to phosphoserine: serine 13 and serine 30. RRM domains follow at residues 130–208 (CRVY…RPSN) and 227–305 (NRIY…RSIT). An RRM 3; atypical domain is found at 537-627 (RVIILRNMVG…RRVVAELYDQ (91 aa)).

This sequence belongs to the RRM half pint family. Interacts with enc. However, given the cytoplasmic localization of enc, the relevance of such interaction is unclear. In terms of tissue distribution, expressed in all germline cells and within the follicle cell.

Its subcellular location is the nucleus. Its function is as follows. Splicing factor that regulates oogenesis and controls both mitosis and mRNA localization in the germline by regulating mRNA splicing of a subset of genes within the ovary. Probably acts by regulating the alternative splice site selection of the otu transcript. Also regulates the alternative splicing of eIF4E1 and grk, while it is not involved in the splicing of par-1, sqd or psq. Involved in the alternative splicing of the bicistronic pre-mRNA encoding Kdm3 and CG8176; required for the efficient production of mRNA encoding Kdm3 and Kdm3-mediated regulation of rhino-dependent piRNA production. The sequence is that of Poly(U)-binding-splicing factor hfp from Drosophila melanogaster (Fruit fly).